Here is a 299-residue protein sequence, read N- to C-terminus: Acetylglutamate kinase (299 aa).

Substrate is bound by residues 64–65 (GG), Arg86, and Asn197.

This sequence belongs to the acetylglutamate kinase family. ArgB subfamily.

It is found in the cytoplasm. It catalyses the reaction N-acetyl-L-glutamate + ATP = N-acetyl-L-glutamyl 5-phosphate + ADP. It participates in amino-acid biosynthesis; L-arginine biosynthesis; N(2)-acetyl-L-ornithine from L-glutamate: step 2/4. Functionally, catalyzes the ATP-dependent phosphorylation of N-acetyl-L-glutamate. This is Acetylglutamate kinase from Persephonella marina (strain DSM 14350 / EX-H1).